We begin with the raw amino-acid sequence, 189 residues long: uncharacterized protein (189 aa).

The N-terminal stretch at 1–19 (MNKLTILFLILALISVIYA) is a signal peptide. The tract at residues 24–189 (PSSSEDSSSN…GSGSSGTVYY (166 aa)) is disordered. Low complexity predominate over residues 25–69 (SSSEDSSSNDSNSQVTGSQSYSGSQSDSNSGSESHTINTGSSYSG). Residues 70–101 (SGSGSSGISGGSGSGSGSGSGSGSGSGSGSGA) show a composition bias toward gly residues. The span at 102–142 (VSGSQSGSGAVSGSQSGSGAVSGSQSGVQTGSQSGAGSASG) shows a compositional bias: low complexity. Residues 144 to 157 (FTGNPSGSQSQEIN) show a composition bias toward polar residues. Gly residues predominate over residues 165-183 (SGSGAPTGAATGSGSGSGS).

This is an uncharacterized protein from Dictyostelium discoideum (Social amoeba).